Here is a 374-residue protein sequence, read N- to C-terminus: PqqA peptide cyclase (374 aa).

The Radical SAM core domain occupies 7–222; it reads VTPPLWLLAE…VADYRQRMGA (216 aa). [4Fe-4S] cluster contacts are provided by Cys21, Cys25, and Cys28.

This sequence belongs to the radical SAM superfamily. PqqE family. As to quaternary structure, interacts with PqqD. The interaction is necessary for activity of PqqE. Requires [4Fe-4S] cluster as cofactor.

The enzyme catalyses [PQQ precursor protein] + S-adenosyl-L-methionine = E-Y cross-linked-[PQQ precursor protein] + 5'-deoxyadenosine + L-methionine + H(+). The protein operates within cofactor biosynthesis; pyrroloquinoline quinone biosynthesis. In terms of biological role, catalyzes the cross-linking of a glutamate residue and a tyrosine residue in the PqqA protein as part of the biosynthesis of pyrroloquinoline quinone (PQQ). In Kluyvera intermedia (Enterobacter intermedius), this protein is PqqA peptide cyclase.